Here is a 385-residue protein sequence, read N- to C-terminus: MNIHEYQAKEILRKYGVPTSTGVVVTKTESINAAIDELNTKVYVVKAQIHAGGRGKAGGVKVVKSKEEAKKVAHDMFGINLVTHQTGPQGQKVNRLYIESGCDILKEYYFSVVFDRSASCITFIASTEGGVDIEEVAEKTPEKIIKFSVDPATGLQNFHAQGIAYELGFKDHQVKQMKEIVKATYKAFIETDAAQIEINPLIVNKEGNLLALDAKFTFDDNGLFKHPEIMALRDQDEEDPLETRAADAGLSYVKMDGSIGCMVNGAGLAMATMDIIKLYGATPANFLDVGGGADRERVKEALKIILSDKEVKGILVNIFGGIMRCDIIAEGIIAAAKDIGIKVPLVVRLAGTNVEKGKEILSNSGLEIIPAHDLADAASKIVEAI.

The ATP-grasp domain maps to 9–244 (KEILRKYGVP…QDEEDPLETR (236 aa)). ATP-binding positions include Lys46, 53 to 55 (GRG), Glu99, Cys102, and Glu107. Mg(2+) contacts are provided by Asn199 and Asp213. Residues Asn264 and 321 to 323 (GIM) contribute to the substrate site.

This sequence belongs to the succinate/malate CoA ligase beta subunit family. Heterotetramer of two alpha and two beta subunits. Mg(2+) is required as a cofactor.

The catalysed reaction is succinate + ATP + CoA = succinyl-CoA + ADP + phosphate. It carries out the reaction GTP + succinate + CoA = succinyl-CoA + GDP + phosphate. It participates in carbohydrate metabolism; tricarboxylic acid cycle; succinate from succinyl-CoA (ligase route): step 1/1. Succinyl-CoA synthetase functions in the citric acid cycle (TCA), coupling the hydrolysis of succinyl-CoA to the synthesis of either ATP or GTP and thus represents the only step of substrate-level phosphorylation in the TCA. The beta subunit provides nucleotide specificity of the enzyme and binds the substrate succinate, while the binding sites for coenzyme A and phosphate are found in the alpha subunit. The protein is Succinate--CoA ligase [ADP-forming] subunit beta of Rickettsia bellii (strain RML369-C).